Consider the following 361-residue polypeptide: Phospho-N-acetylmuramoyl-pentapeptide-transferase (361 aa).

10 consecutive transmembrane segments (helical) span residues 28–48 (LAII…IKFL), 74–94 (TMGG…LADL), 99–119 (IWIT…DDYA), 133–153 (SKLV…EYLD), 168–188 (LNLD…VGSS), 203–223 (VPIA…GNLI), 236–256 (TGEL…FLWF), 263–283 (VFMG…ISVI), 288–308 (IVLA…ILQV), and 338–358 (KVVI…LSSL).

It belongs to the glycosyltransferase 4 family. MraY subfamily. Mg(2+) is required as a cofactor.

The protein localises to the cell inner membrane. It carries out the reaction UDP-N-acetyl-alpha-D-muramoyl-L-alanyl-gamma-D-glutamyl-meso-2,6-diaminopimeloyl-D-alanyl-D-alanine + di-trans,octa-cis-undecaprenyl phosphate = di-trans,octa-cis-undecaprenyl diphospho-N-acetyl-alpha-D-muramoyl-L-alanyl-D-glutamyl-meso-2,6-diaminopimeloyl-D-alanyl-D-alanine + UMP. It participates in cell wall biogenesis; peptidoglycan biosynthesis. In terms of biological role, catalyzes the initial step of the lipid cycle reactions in the biosynthesis of the cell wall peptidoglycan: transfers peptidoglycan precursor phospho-MurNAc-pentapeptide from UDP-MurNAc-pentapeptide onto the lipid carrier undecaprenyl phosphate, yielding undecaprenyl-pyrophosphoryl-MurNAc-pentapeptide, known as lipid I. This is Phospho-N-acetylmuramoyl-pentapeptide-transferase from Rickettsia akari (strain Hartford).